Consider the following 394-residue polypeptide: NAD(P)H-quinone oxidoreductase subunit H (394 aa).

This sequence belongs to the complex I 49 kDa subunit family. In terms of assembly, NDH-1 can be composed of about 15 different subunits; different subcomplexes with different compositions have been identified which probably have different functions.

The protein localises to the cellular thylakoid membrane. The enzyme catalyses a plastoquinone + NADH + (n+1) H(+)(in) = a plastoquinol + NAD(+) + n H(+)(out). The catalysed reaction is a plastoquinone + NADPH + (n+1) H(+)(in) = a plastoquinol + NADP(+) + n H(+)(out). Its function is as follows. NDH-1 shuttles electrons from an unknown electron donor, via FMN and iron-sulfur (Fe-S) centers, to quinones in the respiratory and/or the photosynthetic chain. The immediate electron acceptor for the enzyme in this species is believed to be plastoquinone. Couples the redox reaction to proton translocation, and thus conserves the redox energy in a proton gradient. Cyanobacterial NDH-1 also plays a role in inorganic carbon-concentration. In Picosynechococcus sp. (strain ATCC 27264 / PCC 7002 / PR-6) (Agmenellum quadruplicatum), this protein is NAD(P)H-quinone oxidoreductase subunit H.